The primary structure comprises 26 residues: Mitochondrial import receptor subunit TOM7-2 (26 aa).

This sequence belongs to the Tom7 family. Forms part of the preprotein translocase complex of the outer mitochondrial membrane (TOM complex).

Its subcellular location is the mitochondrion outer membrane. Functionally, seems to act as a modulator of the dynamics of the mitochondrial protein transport machinery. Seems to promote the dissociation of subunits of the outer membrane translocase. This is Mitochondrial import receptor subunit TOM7-2 (TOM7-2) from Solanum tuberosum (Potato).